The sequence spans 248 residues: uncharacterized protein (248 aa).

9-33 is an NADP(+) binding site; it reads IITGASSGIGEATAILLAEKGAKLV. S141 provides a ligand contact to substrate. The Proton acceptor role is filled by Y154.

It belongs to the short-chain dehydrogenases/reductases (SDR) family.

This is an uncharacterized protein from Listeria innocua serovar 6a (strain ATCC BAA-680 / CLIP 11262).